We begin with the raw amino-acid sequence, 333 residues long: uncharacterized protein (333 aa).

The Fe/B12 periplasmic-binding domain maps to 45–318 (NVIVSDSMFI…EYVKIIHPKI (274 aa)).

This is an uncharacterized protein from Methanocaldococcus jannaschii (strain ATCC 43067 / DSM 2661 / JAL-1 / JCM 10045 / NBRC 100440) (Methanococcus jannaschii).